An 881-amino-acid polypeptide reads, in one-letter code: MHLHLLFLLALCGAGCMAAGPSYSLRGSWRVSNGNSSLELPATVPGYVHSALQQHGLIQDPYYRFNDLNYRWISLDNWTYSTEFKIPFNRSEWQKVKLIFDGVDTVAEILFNNVTIGKTDNMFTRYSFDVTNVVKDVNSLKLRFQSAVQYAECQSKAHTQYRVPPECPPVEQKGECHVNFIRKEQCSFSWDWGPSFPSQGIWKDVRIEAYNIAHLDHLTFLPLYDNTSQAWTIEIEASFDVVSTKPVGGQVTIAIPELKTQQANHIELQHGQRIVKLLVKIRKDVTVETWWPHGHGNQTGYNTTILFALDGGLKIEKAAKVYFRTVQLIEEPITGSPGLSFYFKINGLPIFLKGSNWIPADSFQDKVTSELLQLLLQSAVDANMNTLRVWGGGIYEQDEFYALCDELGIMVWQDFMFASALYPTEPGFLESVRKEVTYQVRRLKSHPSVIIWSGNNENEVALRVNWFHVNPRDLGTYINDYVTLYVKTIREIVLSEDRSRPFIASSPTNGVKTMTEGWISKDPYSTQYGDMHFYDYFSDCWDWKVFPKARLVSEYGYQSWPSFSTLQKVSRQEDWSYSSRFSLHRQHHGNGNNEMLHQVQLHFQLPQRRDPVRAFKDTIYLTQVMQAQCIKTETEFYLRSRSEIVNGEGHTMGALYWQLNDIWQAPSWASLEYGGKWKMLHYFAQRFFAPLLPVGFEDEGVFYVYGVSDLHKDYPTKLTVRLHRWSSQKPLCTFVSLSAVIKAGEAMVLFQMPVSKLLKRCKECTRDTCVVSFYLSTDNELFSPTNYHFLSSLKDAKGMVKANITVSISQKGDLFVFDLKSSTSAITPFVWLDVGSIPGRFSDNGFLMIKKELSVLFYPWKPTSKSELQQAFSVTSLTDLY.

Residues Met-1–Ala-18 form the signal peptide. N-linked (GlcNAc...) asparagine glycosylation is found at Asn-35, Asn-77, Asn-89, and Asn-113. The cysteines at positions 167 and 176 are disulfide-linked. Substrate is bound at residue Trp-190 to Trp-192. Residues Asn-226, Asn-297, and Asn-302 are each glycosylated (N-linked (GlcNAc...) asparagine). Asn-456 contacts substrate. Catalysis depends on Glu-457, which acts as the Proton donor. 3 disulfides stabilise this stretch: Cys-540–Cys-629, Cys-732–Cys-761, and Cys-764–Cys-769. Glu-554 functions as the Nucleophile in the catalytic mechanism. Asn-803 carries an N-linked (GlcNAc...) asparagine glycan.

The protein belongs to the glycosyl hydrolase 2 family. Monomer.

It is found in the lysosome. The enzyme catalyses Hydrolysis of terminal, non-reducing beta-D-mannose residues in beta-D-mannosides.. It functions in the pathway glycan metabolism; N-glycan degradation. Its function is as follows. Exoglycosidase that cleaves the single beta-linked mannose residue from the non-reducing end of all N-linked glycoprotein oligosaccharides. This is Beta-mannosidase from Rattus norvegicus (Rat).